Consider the following 38-residue polypeptide: Photosystem II reaction center protein L (38 aa).

The helical transmembrane segment at 17 to 37 threads the bilayer; that stretch reads SLYWGLLLIFVLAVLFSSYIF.

The protein belongs to the PsbL family. As to quaternary structure, PSII is composed of 1 copy each of membrane proteins PsbA, PsbB, PsbC, PsbD, PsbE, PsbF, PsbH, PsbI, PsbJ, PsbK, PsbL, PsbM, PsbT, PsbX, PsbY, PsbZ, Psb30/Ycf12, at least 3 peripheral proteins of the oxygen-evolving complex and a large number of cofactors. It forms dimeric complexes.

The protein localises to the plastid. The protein resides in the chloroplast thylakoid membrane. Its function is as follows. One of the components of the core complex of photosystem II (PSII). PSII is a light-driven water:plastoquinone oxidoreductase that uses light energy to abstract electrons from H(2)O, generating O(2) and a proton gradient subsequently used for ATP formation. It consists of a core antenna complex that captures photons, and an electron transfer chain that converts photonic excitation into a charge separation. This subunit is found at the monomer-monomer interface and is required for correct PSII assembly and/or dimerization. This Ostreococcus tauri protein is Photosystem II reaction center protein L.